The primary structure comprises 218 residues: Probable GTP-binding protein EngB (218 aa).

Positions 23–200 (EVPEIAFVGR…AQLLWQWAHP (178 aa)) constitute an EngB-type G domain. Residues 31–38 (GRSNAGKS), 58–62 (GRTQH), 80–83 (DLPG), 150–153 (TKAD), and 179–181 (FSA) each bind GTP. Residues serine 38 and threonine 60 each coordinate Mg(2+).

It belongs to the TRAFAC class TrmE-Era-EngA-EngB-Septin-like GTPase superfamily. EngB GTPase family. The cofactor is Mg(2+).

In terms of biological role, necessary for normal cell division and for the maintenance of normal septation. In Acidovorax ebreus (strain TPSY) (Diaphorobacter sp. (strain TPSY)), this protein is Probable GTP-binding protein EngB.